Consider the following 686-residue polypeptide: ATP-dependent DNA helicase RecG (686 aa).

The tract at residues 50-149 is wedge domain; that stretch reads TVIDLNQAED…GTQTQENADV (100 aa). One can recognise a Helicase ATP-binding domain in the interval 279–439; sequence DLKAPIRMHR…VFGEMDVSSI (161 aa). 292–299 is an ATP binding site; that stretch reads GDVGSGKT. The short motif at 392–395 is the DEAH box element; that stretch reads DEQH. A Helicase C-terminal domain is found at 462–618; that stretch reads VLMQMTSELK…GFELSERDLE (157 aa).

It belongs to the helicase family. RecG subfamily. Monomer.

The catalysed reaction is Couples ATP hydrolysis with the unwinding of duplex DNA by translocating in the 3'-5' direction.. It carries out the reaction ATP + H2O = ADP + phosphate + H(+). In terms of biological role, plays a critical role in recombination and DNA repair. Helps process Holliday junction intermediates to mature products by catalyzing branch migration. Has replication fork regression activity, unwinds stalled or blocked replication forks to make a HJ that can be resolved. Has a DNA unwinding activity characteristic of a DNA helicase with 3'-5' polarity. The polypeptide is ATP-dependent DNA helicase RecG (Staphylococcus aureus (strain NCTC 8325 / PS 47)).